We begin with the raw amino-acid sequence, 359 residues long: Putative nucleotidyltransferase MAB21L1 (359 aa).

Residues 23–24 and 63–66 each bind a ribonucleoside 5'-triphosphate; these read RK and FEGL. E73 and E75 together coordinate Mg(2+). A ribonucleoside 5'-triphosphate contacts are provided by residues K248 and 252-255; that span reads SLLK.

It belongs to the mab-21 family. Monomer. Homodecamer; composed of 2 back to back homopentamers. The protein may exist as monomer in solution and oiligomerizes upon ligand binding.

The protein localises to the nucleus. In terms of biological role, putative nucleotidyltransferase required for several aspects of embryonic development including normal development of the eye. It is unclear whether it displays nucleotidyltransferase activity in vivo. Binds single-stranded RNA (ssRNA). This is Putative nucleotidyltransferase MAB21L1 (mab21l1) from Danio rerio (Zebrafish).